The chain runs to 229 residues: Prolactin (229 aa).

The signal sequence occupies residues 1–30 (MDNKGWSLKGSLLFLLLLLSDLLLCKSVAS). The cysteines at positions 34 and 41 are disulfide-linked. Ser-56 is modified (phosphoserine). Residue Asn-61 is glycosylated (N-linked (GlcNAc...) asparagine). 2 positions are modified to phosphoserine: Ser-64 and Ser-120. Cystine bridges form between Cys-88–Cys-204 and Cys-221–Cys-229.

It belongs to the somatotropin/prolactin family. In terms of assembly, interacts with PRLR.

The protein resides in the secreted. Its function is as follows. Prolactin acts primarily on the mammary gland by promoting lactation. In Felis catus (Cat), this protein is Prolactin (PRL).